The sequence spans 61 residues: Conotoxin Am14.1 (61 aa).

2 consecutive propeptides follow at residues Met1 to Arg19 and Lys52 to Gln61.

In terms of processing, mostly non-hydroxylated. Post-translationally, contains 2 disulfide bonds. In terms of tissue distribution, expressed by the venom duct.

The protein localises to the secreted. Probable toxin that inhibits ion channels. This is Conotoxin Am14.1 from Conus amadis (Amadis cone).